Consider the following 378-residue polypeptide: Cyclic di-GMP phosphodiesterase response regulator RpfG (378 aa).

In terms of domain architecture, Response regulatory spans 29-147 (NIVIVDDQMS…ELRARCSNLL (119 aa)). Asp80 is modified (4-aspartylphosphate). One can recognise an HD-GYP domain in the interval 174–371 (VEERERETLS…LEQICGQFST (198 aa)).

In terms of assembly, interacts with a subset of GGDEF domain-containing proteins. In terms of processing, phosphorylated and activated by RpfC.

The protein localises to the cytoplasm. The catalysed reaction is 3',3'-c-di-GMP + 2 H2O = 2 GMP + 2 H(+). In terms of biological role, member of the two-component regulatory system RpfG/RpfC, which is involved in the perception and response to the diffusible signaling factor (DSF), which is essential for cell-cell signaling. Detection of DSF leads to the positive regulation of biofilm dispersal and the production of virulence factors. Activated RpfG degrades cyclic di-GMP to GMP, leading to the activation of Clp, a global transcriptional regulator that regulates a large set of genes in DSF pathway. May also directly control genes involved in biofilm dispersal. The polypeptide is Cyclic di-GMP phosphodiesterase response regulator RpfG (rpfG) (Xanthomonas campestris pv. campestris (strain 8004)).